The following is a 903-amino-acid chain: Zinc finger CCCH domain-containing protein 27 (903 aa).

The segment at 1-144 (MIKESSSPAL…GRNGAPWAQH (144 aa)) is disordered. Basic and acidic residues predominate over residues 11 to 24 (DADKIEVPSPKDEN). Residues 33-46 (TDNEDFEISDDDDD) show a composition bias toward acidic residues. A compositionally biased stretch (basic and acidic residues) spans 86-96 (SHGEAQKDFFP). The segment at 225 to 253 (GMPRQRCRDFEERGFCLRGDMCPMEHGLN) adopts a C3H1-type zinc-finger fold. The disordered stretch occupies residues 390 to 456 (ASKKLGHGKT…GRQSNRASHK (67 aa)). A compositionally biased stretch (low complexity) spans 397-410 (GKTANATSTSATGN). Positions 432-441 (KDSNGQSNSR) are enriched in polar residues. The region spanning 459–531 (RTLYVNGIPL…RFIKLWWANR (73 aa)) is the RRM domain. 3 disordered regions span residues 545 to 609 (KSSH…DTKR), 642 to 720 (KQKG…QTSP), and 826 to 903 (TNHS…DVSQ). A compositionally biased stretch (polar residues) spans 556 to 576 (SVPQPSSSNRGKENLQSATPR). The segment covering 577–587 (ASSGSSAEASG) has biased composition (low complexity). Residues 608–649 (KRQESLELLEELRKKQEILAQKRDEFRRQLEKLAKQKGLANS) are a coiled coil. Residues 693–708 (SGELASSSHKSSATSA) are compositionally biased toward low complexity. The span at 826–886 (TNHSRFQKTS…SMPTATSAKT (61 aa)) shows a compositional bias: polar residues.

The sequence is that of Zinc finger CCCH domain-containing protein 27 from Oryza sativa subsp. japonica (Rice).